The following is a 211-amino-acid chain: N-(5'-phosphoribosyl)anthranilate isomerase (211 aa).

This sequence belongs to the TrpF family.

It catalyses the reaction N-(5-phospho-beta-D-ribosyl)anthranilate = 1-(2-carboxyphenylamino)-1-deoxy-D-ribulose 5-phosphate. It functions in the pathway amino-acid biosynthesis; L-tryptophan biosynthesis; L-tryptophan from chorismate: step 3/5. The chain is N-(5'-phosphoribosyl)anthranilate isomerase from Pseudomonas paraeruginosa (strain DSM 24068 / PA7) (Pseudomonas aeruginosa (strain PA7)).